The primary structure comprises 258 residues: Ribonuclease PH (258 aa).

Phosphate-binding positions include Arg-86 and 124-126 (GTR).

Belongs to the RNase PH family. Homohexameric ring arranged as a trimer of dimers.

The enzyme catalyses tRNA(n+1) + phosphate = tRNA(n) + a ribonucleoside 5'-diphosphate. Its function is as follows. Phosphorolytic 3'-5' exoribonuclease that plays an important role in tRNA 3'-end maturation. Removes nucleotide residues following the 3'-CCA terminus of tRNAs; can also add nucleotides to the ends of RNA molecules by using nucleoside diphosphates as substrates, but this may not be physiologically important. Probably plays a role in initiation of 16S rRNA degradation (leading to ribosome degradation) during starvation. The protein is Ribonuclease PH of Caldicellulosiruptor saccharolyticus (strain ATCC 43494 / DSM 8903 / Tp8T 6331).